Here is a 250-residue protein sequence, read N- to C-terminus: MSDLQTQMDLEQQGVLFTTINKLYNWGRRSSVWPMQFGLACCAIEMIAAAASRYDISRFGSELFRASPRQADVMIVAGTVTKKMVPQVVRLFNQMPEPRYVISMGACATSGGPFRDGYNVVRGVDLYVPVDVYIPGCPPRPEALLHALMTLQAQIDVQSLQQVRWYGDDEGVVNEFPVPIFGAEGLEVPGIPGTADPVGGTPKMPPFVSPALGGKGERDASIKALEGNQPKPMLRAGTVTIEEVAHGIAG.

Positions 41, 42, 107, and 137 each coordinate [4Fe-4S] cluster.

The protein belongs to the complex I 20 kDa subunit family. As to quaternary structure, NDH-1 is composed of 14 different subunits. Subunits NuoB, C, D, E, F, and G constitute the peripheral sector of the complex. Requires [4Fe-4S] cluster as cofactor.

The protein localises to the cell membrane. It carries out the reaction a quinone + NADH + 5 H(+)(in) = a quinol + NAD(+) + 4 H(+)(out). Functionally, NDH-1 shuttles electrons from NADH, via FMN and iron-sulfur (Fe-S) centers, to quinones in the respiratory chain. The immediate electron acceptor for the enzyme in this species is believed to be ubiquinone. Couples the redox reaction to proton translocation (for every two electrons transferred, four hydrogen ions are translocated across the cytoplasmic membrane), and thus conserves the redox energy in a proton gradient. This is NADH-quinone oxidoreductase subunit B 2 from Herpetosiphon aurantiacus (strain ATCC 23779 / DSM 785 / 114-95).